Here is a 304-residue protein sequence, read N- to C-terminus: Release factor glutamine methyltransferase (304 aa).

Positions 144 and 188 each coordinate S-adenosyl-L-methionine. Substrate is bound at residue 188–191 (NPPY).

The protein belongs to the protein N5-glutamine methyltransferase family. PrmC subfamily.

The enzyme catalyses L-glutaminyl-[peptide chain release factor] + S-adenosyl-L-methionine = N(5)-methyl-L-glutaminyl-[peptide chain release factor] + S-adenosyl-L-homocysteine + H(+). In terms of biological role, methylates the class 1 translation termination release factors RF1/PrfA and RF2/PrfB on the glutamine residue of the universally conserved GGQ motif. The chain is Release factor glutamine methyltransferase from Mycobacterium tuberculosis (strain CDC 1551 / Oshkosh).